The chain runs to 217 residues: Small ribosomal subunit protein uS3c (217 aa).

The KH type-2 domain maps to 43 to 117 (IKNYVQKNKR…KLNIAITRIA (75 aa)).

The protein belongs to the universal ribosomal protein uS3 family. Part of the 30S ribosomal subunit.

The protein localises to the plastid. Its subcellular location is the chloroplast. The chain is Small ribosomal subunit protein uS3c (rps3) from Platanus occidentalis (Sycamore).